The chain runs to 310 residues: DDRGK domain-containing protein 1 (310 aa).

The helical transmembrane segment at 1-21 threads the bilayer; the sequence is MAAIIYLAIAAVASILLFVAV. The Cytoplasmic segment spans residues 22 to 310; the sequence is KLLSTDTKTE…DSPAEISVNA (289 aa). Disordered stretches follow at residues 38-85 and 110-162; these read VGEL…DEYQ and KAEK…LKEE. Residues 52 to 70 show a composition bias toward basic residues; that stretch reads PRARARRGLRNKTNRSKTQ. Acidic residues predominate over residues 76–85; sequence DYDDYDDEYQ.

The protein belongs to the DDRGK1 family.

The protein resides in the endoplasmic reticulum membrane. Functionally, substrate adapter for ufmylation, the covalent attachment of the ubiquitin-like modifier UFM1 to substrate proteins. This Trichoplax adhaerens (Trichoplax reptans) protein is DDRGK domain-containing protein 1.